Consider the following 519-residue polypeptide: Bifunctional purine biosynthesis protein PurH (519 aa).

In terms of domain architecture, MGS-like spans 1–147; it reads MAKITRALIS…KNNHDVTVLV (147 aa).

It belongs to the PurH family.

The catalysed reaction is (6R)-10-formyltetrahydrofolate + 5-amino-1-(5-phospho-beta-D-ribosyl)imidazole-4-carboxamide = 5-formamido-1-(5-phospho-D-ribosyl)imidazole-4-carboxamide + (6S)-5,6,7,8-tetrahydrofolate. The enzyme catalyses IMP + H2O = 5-formamido-1-(5-phospho-D-ribosyl)imidazole-4-carboxamide. Its pathway is purine metabolism; IMP biosynthesis via de novo pathway; 5-formamido-1-(5-phospho-D-ribosyl)imidazole-4-carboxamide from 5-amino-1-(5-phospho-D-ribosyl)imidazole-4-carboxamide (10-formyl THF route): step 1/1. It participates in purine metabolism; IMP biosynthesis via de novo pathway; IMP from 5-formamido-1-(5-phospho-D-ribosyl)imidazole-4-carboxamide: step 1/1. In Trichlorobacter lovleyi (strain ATCC BAA-1151 / DSM 17278 / SZ) (Geobacter lovleyi), this protein is Bifunctional purine biosynthesis protein PurH.